A 393-amino-acid polypeptide reads, in one-letter code: Putative zinc metalloprotease Rip3 (393 aa).

A run of 2 helical transmembrane segments spans residues 10-30 and 45-65; these read IAGFVVNVHWSVLVILWLFTW and AVVYWLLGAGGAVMLLASLLA. His66 contacts Zn(2+). Residue Glu67 is part of the active site. Residue His70 participates in Zn(2+) binding. The next 4 helical transmembrane spans lie at 77-97, 108-128, 136-156, and 207-227; these read AGVSVESVTLWLFGGVTALGG, IAFAGPATSLALSATFGALAI, PAIVISVAWWLATVNLLLGLF, and FVAGGLVGGVWLAFIGWFIFA. CBS domains lie at 251–308 and 315–376; these read MTAQ…RRST and ALPL…AQPE.

Belongs to the peptidase M50B family. It depends on Zn(2+) as a cofactor.

Its subcellular location is the cell membrane. The polypeptide is Putative zinc metalloprotease Rip3 (rip3) (Mycobacterium tuberculosis (strain ATCC 35801 / TMC 107 / Erdman)).